The chain runs to 259 residues: Global transcriptional regulator CodY (259 aa).

The GAF domain stretch occupies residues methionine 1 to leucine 155. The segment at residues alanine 203–arginine 222 is a DNA-binding region (H-T-H motif). Residue serine 215 is modified to Phosphoserine.

It belongs to the CodY family.

Its subcellular location is the cytoplasm. Its function is as follows. DNA-binding global transcriptional regulator which is involved in the adaptive response to starvation and acts by directly or indirectly controlling the expression of numerous genes in response to nutrient availability. During rapid exponential growth, CodY is highly active and represses genes whose products allow adaptation to nutrient depletion. This is Global transcriptional regulator CodY from Bacillus cytotoxicus (strain DSM 22905 / CIP 110041 / 391-98 / NVH 391-98).